The chain runs to 618 residues: GMC oxidoreductase family protein Mala s 12 (618 aa).

The signal sequence occupies residues 1–23 (MKGIVSWAVVSAALVLSATESLA). FAD-binding residues include Val129 and Val280. The active-site Proton donor is the His556. His599 functions as the Proton acceptor in the catalytic mechanism.

It belongs to the GMC oxidoreductase family. Monomer. FAD serves as cofactor.

It localises to the secreted. This is GMC oxidoreductase family protein Mala s 12 from Malassezia sympodialis (strain ATCC 42132) (Atopic eczema-associated yeast).